We begin with the raw amino-acid sequence, 283 residues long: Non-selective voltage-gated ion channel VDAC1 (283 aa).

Residue Ala-2 is modified to N-acetylalanine. Residue Lys-12 coordinates ATP. Residue Lys-12 forms a Glycyl lysine isopeptide (Lys-Gly) (interchain with G-Cter in ubiquitin) linkage. Phosphoserine is present on Ser-13. Residue Thr-19 is modified to Phosphothreonine. Lys-20 provides a ligand contact to ATP. An N6-acetyllysine; alternate modification is found at Lys-20. At Lys-20 the chain carries N6-succinyllysine; alternate. Residue Lys-20 forms a Glycyl lysine isopeptide (Lys-Gly) (interchain with G-Cter in ubiquitin); alternate linkage. 2 beta stranded membrane-spanning segments follow: residues 26 to 35 and 39 to 47; these read LIKLDLKTKS and LEFTSSGSA. Residues Lys-53 and Lys-61 each participate in a glycyl lysine isopeptide (Lys-Gly) (interchain with G-Cter in ubiquitin) cross-link. The beta stranded transmembrane segment at 54–64 threads the bilayer; sequence VNGSLETKYRW. Tyr-67 carries the phosphotyrosine modification. 3 beta stranded membrane passes run 69–76, 80–89, and 95–104; these read LTFTEKWN, TLGTEITVED, and LKLTFDSSFS. Thr-107 bears the Phosphothreonine mark. Position 109 is an N6-acetyllysine; alternate (Lys-109). Lys-109 is covalently cross-linked (Glycyl lysine isopeptide (Lys-Gly) (interchain with G-Cter in ubiquitin); alternate). A Glycyl lysine isopeptide (Lys-Gly) (interchain with G-Cter in ubiquitin) cross-link involves residue Lys-110. 4 beta stranded membrane-spanning segments follow: residues 111 to 120, 123 to 130, 137 to 145, and 150 to 158; these read NAKIKTGYKR, INLGCDVD, SIRGALVLG, and LAGYQMNFE. Residue Ser-137 is modified to Phosphoserine. Lys-161 is covalently cross-linked (Glycyl lysine isopeptide (Lys-Gly) (interchain with G-Cter in ubiquitin)). 6 consecutive transmembrane segments (beta stranded) span residues 163–175, 178–185, 189–198, 202–211, 218–227, and 231–238; these read RVTQSNFAVGYKT, FQLHTNVN, EFGGSIYQKV, LETAVNLAWT, RFGIAAKYQV, and ACFSAKVN. Position 193 is a phosphoserine; by NEK1 (Ser-193). Ser-240 bears the Phosphoserine mark. 242–244 is an NAD(+) binding site; sequence LIG. A beta stranded membrane pass occupies residues 242-251; it reads LIGLGYTQTL. Lys-252 is modified (N6-acetyllysine). A beta stranded transmembrane segment spans residues 254–263; sequence GIKLTLSALL. Position 260–264 (260–264) interacts with NAD(+); that stretch reads SALLD. The residue at position 266 (Lys-266) is an N6-acetyllysine; alternate. A Glycyl lysine isopeptide (Lys-Gly) (interchain with G-Cter in ubiquitin); alternate cross-link involves residue Lys-266. The beta stranded transmembrane segment at 273–282 threads the bilayer; that stretch reads HKLGLGLEFQ. Lys-274 participates in a covalent cross-link: Glycyl lysine isopeptide (Lys-Gly) (interchain with G-Cter in ubiquitin).

This sequence belongs to the eukaryotic mitochondrial porin family. Homodimer and homotrimer; in response to cyclic AMP or calcium; oligomerization is required for scramblase activity. Component of the mitochondrial permeability transition pore complex (mPTPC), at least composed of SPG7, VDAC1 and PPIF. Interacts with SPG7, NIPSNAP2 and SLC25A30. Interacts with hexokinases including HK1. The HK1-VDAC1 complex interacts with ATF2. Interacts with BCL2L1. Interacts with BAK1. Interacts with RTL10/BOP (via BH3 domain). Interacts with amyloid-beta and APP; induces VDAC1 dephosphorylation. Interacts with TMEM41B. Interacts with BCAP31. Interacts with HSPA9; this interaction couples ITPR1 to VDAC1. In terms of processing, phosphorylation at Ser-193 by NEK1 promotes the closed conformational state preventing excessive mitochondrial membrane permeability and subsequent apoptotic cell death after injury. Phosphorylation by the AKT-GSK3B axis stabilizes the protein probably by preventing ubiquitin-mediated proteasomal degradation. Post-translationally, ubiquitinated. Undergoes monoubiquitination and polyubiquitination by PRKN; monoubiquitination at Lys-274 inhibits apoptosis, whereas polyubiquitination leads to its degradation and promotes mitophagy. Deubiquitinated by USP30. As to expression, widely expressed. High levels in heart and kidney with lower levels in brain and ascitic tumor. Very low levels in liver.

It localises to the mitochondrion outer membrane. The protein localises to the cell membrane. The protein resides in the membrane raft. The enzyme catalyses Ca(2+)(in) = Ca(2+)(out). It carries out the reaction Na(+)(in) = Na(+)(out). The catalysed reaction is chloride(in) = chloride(out). It catalyses the reaction Mg(2+)(in) = Mg(2+)(out). The enzyme catalyses K(+)(in) = K(+)(out). It carries out the reaction ATP(in) = ATP(out). The catalysed reaction is L-glutamate(out) = L-glutamate(in). It catalyses the reaction dopamine(out) = dopamine(in). The enzyme catalyses acetylcholine(in) = acetylcholine(out). It carries out the reaction Fe(III)-[cytochrome c](out) = Fe(III)-[cytochrome c](in). The catalysed reaction is a 1,2-diacyl-sn-glycero-3-phosphocholine(in) = a 1,2-diacyl-sn-glycero-3-phosphocholine(out). It catalyses the reaction a 1,2-diacyl-sn-glycero-3-phospho-L-serine(in) = a 1,2-diacyl-sn-glycero-3-phospho-L-serine(out). Its activity is regulated as follows. Inhibited by nitric oxide. Voltage-gated ion channel activity is inhibited by lanthanum(3+) and ruthenium red. Mitochondrial calcium transport is inhibited by lanthanum(3+), ruthenium red and Ru360. Functionally, non-selective voltage-gated ion channel that mediates the transport of anions and cations through the mitochondrion outer membrane and plasma membrane. The channel at the outer mitochondrial membrane allows diffusion of small hydrophilic molecules; in the plasma membrane it is involved in cell volume regulation and apoptosis. It adopts an open conformation at low or zero membrane potential and a closed conformation at potentials above 30-40 mV. The open state has a weak anion selectivity whereas the closed state is cation-selective. Binds various signaling molecules, including the sphingolipid ceramide, the phospholipid phosphatidylcholine, and the sterols cholesterol and oxysterol. In depolarized mitochondria, acts downstream of PRKN and PINK1 to promote mitophagy or prevent apoptosis; polyubiquitination by PRKN promotes mitophagy, while monoubiquitination by PRKN decreases mitochondrial calcium influx which ultimately inhibits apoptosis. May participate in the formation of the permeability transition pore complex (PTPC) responsible for the release of mitochondrial products that triggers apoptosis. May mediate ATP export from cells. Part of a complex composed of HSPA9, ITPR1 and VDAC1 that regulates mitochondrial calcium-dependent apoptosis by facilitating calcium transport from the ER lumen to the mitochondria intermembrane space thus providing calcium for the downstream calcium channel MCU that directly releases it into mitochondria matrix. In terms of biological role, catalyzes the scrambling of phospholipids across the outer mitochondrial membrane; the mechanism is unrelated to channel activity and is capable of translocating both anionic and zwitterionic phospholipids. The polypeptide is Non-selective voltage-gated ion channel VDAC1 (Rattus norvegicus (Rat)).